The sequence spans 492 residues: MKKAILSVSNKTGIVEFAKALTQLNYELYSTGGTKRILDEANVPVRSVSDLTHFPEIMDGRVKTLHPAVHGGILADRNKPQHLNELSEQHIDLIDMVVVNLYPFQQTVANPDVTMDEAIENIDIGGPTMLRAAAKNYKHVTTIVHPADYQEVLTRLRNDSLDESYRQSLMIKVFEHTAEYDEAIVRFFKGDKETLRYGENPQQSAYFVRTSNAKHTIAGAKQLHGKQLSYNNIKDADATLALVKKFDTPATVAVKHMNPCGVGIGDTIEQAFQHAYEADSQSIFGGIVALNRAVTPELAEQLHSIFLEVIIAPKFTDEALDILKQKKNVRLLEIDMTIDSNEEEFVSVSGGYLVQDKDNYVVPKEEMKVVTEVAPTDEQWEAMLLGWKVVPSVKSNAIILSNNKQTVGIGAGQMNRVGAAKIALERAIEINDHVALVSDGFFPMGDTVELAAQHGIKAIIQPGGSIKDQDSIDMANKHGIAMVVTGTRHFKH.

An MGS-like domain is found at 1-144 (MKKAILSVSN…KNYKHVTTIV (144 aa)).

The protein belongs to the PurH family.

The enzyme catalyses (6R)-10-formyltetrahydrofolate + 5-amino-1-(5-phospho-beta-D-ribosyl)imidazole-4-carboxamide = 5-formamido-1-(5-phospho-D-ribosyl)imidazole-4-carboxamide + (6S)-5,6,7,8-tetrahydrofolate. The catalysed reaction is IMP + H2O = 5-formamido-1-(5-phospho-D-ribosyl)imidazole-4-carboxamide. The protein operates within purine metabolism; IMP biosynthesis via de novo pathway; 5-formamido-1-(5-phospho-D-ribosyl)imidazole-4-carboxamide from 5-amino-1-(5-phospho-D-ribosyl)imidazole-4-carboxamide (10-formyl THF route): step 1/1. Its pathway is purine metabolism; IMP biosynthesis via de novo pathway; IMP from 5-formamido-1-(5-phospho-D-ribosyl)imidazole-4-carboxamide: step 1/1. The polypeptide is Bifunctional purine biosynthesis protein PurH (Staphylococcus aureus (strain MSSA476)).